The sequence spans 619 residues: Alpha-(1,6)-fucosyltransferase (619 aa).

The Cytoplasmic portion of the chain corresponds to methionine 1 to arginine 17. A helical; Signal-anchor for type II membrane protein transmembrane segment spans residues alanine 18–threonine 38. Over asparagine 39 to isoleucine 619 the chain is Lumenal. 3 disulfides stabilise this stretch: cysteine 253–cysteine 315, cysteine 261–cysteine 279, and cysteine 267–cysteine 271. The 285-residue stretch at asparagine 255–leucine 539 folds into the GT23 domain. The SH3-binding motif lies at proline 345–proline 351. The tract at residues arginine 411 to arginine 412 is important for donor substrate binding. Cysteine 511 and cysteine 518 are joined by a disulfide. One can recognise an SH3 domain in the interval glutamine 548–aspartate 609.

It belongs to the glycosyltransferase 23 family. The cofactor is Mn(2+). Mg(2+) serves as cofactor.

It is found in the golgi apparatus. The protein resides in the golgi stack membrane. It catalyses the reaction N(4)-{beta-D-GlcNAc-(1-&gt;2)-alpha-D-Man-(1-&gt;3)-[beta-D-GlcNAc-(1-&gt;2)-alpha-D-Man-(1-&gt;6)]-beta-D-Man-(1-&gt;4)-beta-D-GlcNAc-(1-&gt;4)-beta-D-GlcNAc}-L-asparaginyl-[protein] + GDP-beta-L-fucose = an N(4)-{beta-D-GlcNAc-(1-&gt;2)-alpha-D-Man-(1-&gt;3)-[beta-D-GlcNAc-(1-&gt;2)-alpha-D-Man-(1-&gt;6)]-beta-D-Man-(1-&gt;4)-beta-D-GlcNAc-(1-&gt;4)-[alpha-L-Fuc-(1-&gt;6)]-beta-D-GlcNAc}-L-asparaginyl-[protein] + GDP + H(+). The protein operates within protein modification; protein glycosylation. Catalyzes the addition of fucose in alpha 1-6 linkage to the first GlcNAc residue, next to the peptide chains in N-glycans. The addition is prevented if the GlcNAc residue is already fucosylated. In Drosophila melanogaster (Fruit fly), this protein is Alpha-(1,6)-fucosyltransferase (FucT6).